We begin with the raw amino-acid sequence, 314 residues long: Olfactory receptor 14A2 (314 aa).

At 1–26 the chain is on the extracellular side; that stretch reads MANVTLVTGFLLMGFSNIQKLRILYG. N-linked (GlcNAc...) asparagine glycosylation is present at asparagine 3. The chain crosses the membrane as a helical span at residues 27–47; sequence VLFLLIYLAALMSNLLIITLI. The Cytoplasmic segment spans residues 48 to 55; that stretch reads TLDVKLQT. A helical membrane pass occupies residues 56-76; the sequence is PMYFFLKNLSFLDVFLVSVPI. Residues 77 to 91 are Extracellular-facing; it reads PKFIVNNLTHNNSIS. Asparagine 83 is a glycosylation site (N-linked (GlcNAc...) asparagine). The helical transmembrane segment at 92-112 threads the bilayer; the sequence is ILGCAFQLLLMTSFSAGEIFI. Cysteine 95 and cysteine 177 are oxidised to a cystine. Residues 113–136 lie on the Cytoplasmic side of the membrane; the sequence is LTAMSYDRYVAICCPLNYEVIMNT. Residues 137–157 traverse the membrane as a helical segment; it reads GVCVLMASVSWAIGGLFGTAY. Over 158–193 the chain is Extracellular; the sequence is TAGTFSMPFCGSSVIPQFFCDVPSLLRISCSETLMV. Residues 194 to 214 form a helical membrane-spanning segment; sequence IYAGIGVGACLSISCFICIVI. The Cytoplasmic portion of the chain corresponds to 215–237; the sequence is SYIYIFSTVLKIPTTKGQSKAFS. The chain crosses the membrane as a helical span at residues 238-258; sequence TCFPHLTVFTVFIITAYFVYL. Residues 259–267 are Extracellular-facing; that stretch reads KPPSNSPSV. The helical transmembrane segment at 268 to 290 threads the bilayer; that stretch reads IDRLLSVIYTVMPPVFNPVTYSL. Residues 291–314 lie on the Cytoplasmic side of the membrane; sequence RNNDMKCALIRLLQKTYGQEAYFI.

This sequence belongs to the G-protein coupled receptor 1 family.

It is found in the cell membrane. Functionally, odorant receptor. The polypeptide is Olfactory receptor 14A2 (OR14A2) (Homo sapiens (Human)).